The primary structure comprises 309 residues: Homoserine kinase (309 aa).

Residue 91-101 (PIGSGLGSSAC) coordinates ATP.

Belongs to the GHMP kinase family. Homoserine kinase subfamily.

It localises to the cytoplasm. The enzyme catalyses L-homoserine + ATP = O-phospho-L-homoserine + ADP + H(+). It participates in amino-acid biosynthesis; L-threonine biosynthesis; L-threonine from L-aspartate: step 4/5. Its function is as follows. Catalyzes the ATP-dependent phosphorylation of L-homoserine to L-homoserine phosphate. The chain is Homoserine kinase from Edwardsiella ictaluri (strain 93-146).